Reading from the N-terminus, the 487-residue chain is Recombining binding protein suppressor of hairless (487 aa).

DNA-binding regions lie at residues glutamine 44–phenylalanine 54 and serine 152–lysine 157. At lysine 162 the chain carries N6-acetyllysine. The DNA-binding stretch occupies residues arginine 179–threonine 184. Residues proline 342–threonine 432 enclose the IPT/TIG domain. The segment covering serine 452 to tyrosine 468 has biased composition (polar residues). The segment at serine 452–serine 487 is disordered. The segment covering threonine 469–serine 487 has biased composition (low complexity).

Belongs to the Su(H) family. In terms of assembly, interacts with activated NOTCH1, NOTCH2 or NOTCH3. Interacts with MINT/SHARP. This interaction may mediate the recruitment of large corepressor complexes containing proteins such as HDAC1, HDAC2, NCOR2, SAP30, FHL1/KYOT2 and CIR1. Interacts with EP300, MAML1 and PTF1A. Interacts with RITA1, leading to nuclear export, prevent the interaction between RBPJ and NICD product and subsequent down-regulation of the Notch signaling pathway. Interacts with SNW1. Interacts with CHCHD2 and CXXC5. Interacts with BEND6 (via BEN domain). Interacts with NKAPL. Interacts with ZMIZ1. Interacts with RBM15. Interacts with L3MBTL3 and KDM1A; the interaction with KDM1A is weaker in the absence of L3MBTL3 and the interaction with L3MBTL3 is impaired by Notch-derived peptides containing the intracellular domain (NICD).

It is found in the nucleus. The protein localises to the cytoplasm. Functionally, transcriptional regulator that plays a central role in Notch signaling, a signaling pathway involved in cell-cell communication that regulates a broad spectrum of cell-fate determinations. Acts as a transcriptional repressor when it is not associated with Notch proteins. When associated with some NICD product of Notch proteins (Notch intracellular domain), it acts as a transcriptional activator that activates transcription of Notch target genes. Probably represses or activates transcription via the recruitment of chromatin remodeling complexes containing histone deacetylase or histone acetylase proteins, respectively. Specifically binds to the immunoglobulin kappa-type J segment recombination signal sequence. Binds specifically to methylated DNA. Binds to the oxygen responsive element of COX4I2 and activates its transcription under hypoxia conditions (4% oxygen). Negatively regulates the phagocyte oxidative burst in response to bacterial infection by repressing transcription of NADPH oxidase subunits. The protein is Recombining binding protein suppressor of hairless (RBPJ) of Bos taurus (Bovine).